The chain runs to 341 residues: Heat-inducible transcription repressor HrcA (341 aa).

Belongs to the HrcA family.

Its function is as follows. Negative regulator of class I heat shock genes (grpE-dnaK-dnaJ and groELS operons). Prevents heat-shock induction of these operons. The sequence is that of Heat-inducible transcription repressor HrcA from Leptothrix cholodnii (strain ATCC 51168 / LMG 8142 / SP-6) (Leptothrix discophora (strain SP-6)).